The primary structure comprises 191 residues: Cell division protein SepF (191 aa).

Polar residues predominate over residues 153 to 178 (FPEEASPSNVSSKKTSQYKFETNTTP). The tract at residues 153–191 (FPEEASPSNVSSKKTSQYKFETNTTPEPAWGESKLSAYN) is disordered.

It belongs to the SepF family. As to quaternary structure, homodimer. Interacts with FtsZ.

Its subcellular location is the cytoplasm. Functionally, cell division protein that is part of the divisome complex and is recruited early to the Z-ring. Probably stimulates Z-ring formation, perhaps through the cross-linking of FtsZ protofilaments. Its function overlaps with FtsA. In Prochlorococcus marinus subsp. pastoris (strain CCMP1986 / NIES-2087 / MED4), this protein is Cell division protein SepF.